A 492-amino-acid chain; its full sequence is Ketol-acid reductoisomerase (NADP(+)) (492 aa).

The 194-residue stretch at 15–208 (AQLGKCRFMA…GAHRAGVLES (194 aa)) folds into the KARI N-terminal Rossmann domain. NADP(+) is bound by residues 45 to 48 (CGAQ), R68, R76, S78, and 108 to 110 (DKQ). H132 is an active-site residue. G158 serves as a coordination point for NADP(+). KARI C-terminal knotted domains follow at residues 209 to 344 (SFVA…NSPE) and 345 to 485 (YDGK…MTDM). Residues D217, E221, E389, and E393 each contribute to the Mg(2+) site. S414 is a substrate binding site.

This sequence belongs to the ketol-acid reductoisomerase family. Requires Mg(2+) as cofactor.

The catalysed reaction is (2R)-2,3-dihydroxy-3-methylbutanoate + NADP(+) = (2S)-2-acetolactate + NADPH + H(+). It catalyses the reaction (2R,3R)-2,3-dihydroxy-3-methylpentanoate + NADP(+) = (S)-2-ethyl-2-hydroxy-3-oxobutanoate + NADPH + H(+). The protein operates within amino-acid biosynthesis; L-isoleucine biosynthesis; L-isoleucine from 2-oxobutanoate: step 2/4. Its pathway is amino-acid biosynthesis; L-valine biosynthesis; L-valine from pyruvate: step 2/4. In terms of biological role, involved in the biosynthesis of branched-chain amino acids (BCAA). Catalyzes an alkyl-migration followed by a ketol-acid reduction of (S)-2-acetolactate (S2AL) to yield (R)-2,3-dihydroxy-isovalerate. In the isomerase reaction, S2AL is rearranged via a Mg-dependent methyl migration to produce 3-hydroxy-3-methyl-2-ketobutyrate (HMKB). In the reductase reaction, this 2-ketoacid undergoes a metal-dependent reduction by NADPH to yield (R)-2,3-dihydroxy-isovalerate. This is Ketol-acid reductoisomerase (NADP(+)) from Photorhabdus laumondii subsp. laumondii (strain DSM 15139 / CIP 105565 / TT01) (Photorhabdus luminescens subsp. laumondii).